We begin with the raw amino-acid sequence, 331 residues long: NADH-quinone oxidoreductase subunit H 2 (331 aa).

A run of 8 helical transmembrane segments spans residues 6 to 26 (AGFLVLIAKLTIVLAVLLLVA), 79 to 99 (IFMLAPAVVAATALLVFAVIP), 120 to 140 (VGLLYFFALSSLGVYGVALGG), 155 to 175 (GAAQMISYELSLGLAIVPVVM), 193 to 213 (PFILTQPVAFAIFVISAMAEI), 242 to 262 (LFFLGEYVNMQVLGGLVAVLF), 271 to 291 (LPPVVWLFIKIVLVALIMIWV), and 310 to 330 (VLIPLALVNIMVTGAWVLWMG).

It belongs to the complex I subunit 1 family. In terms of assembly, NDH-1 is composed of 14 different subunits. Subunits NuoA, H, J, K, L, M, N constitute the membrane sector of the complex.

The protein resides in the cell inner membrane. It catalyses the reaction a quinone + NADH + 5 H(+)(in) = a quinol + NAD(+) + 4 H(+)(out). Its function is as follows. NDH-1 shuttles electrons from NADH, via FMN and iron-sulfur (Fe-S) centers, to quinones in the respiratory chain. The immediate electron acceptor for the enzyme in this species is believed to be ubiquinone. Couples the redox reaction to proton translocation (for every two electrons transferred, four hydrogen ions are translocated across the cytoplasmic membrane), and thus conserves the redox energy in a proton gradient. This subunit may bind ubiquinone. The sequence is that of NADH-quinone oxidoreductase subunit H 2 from Syntrophobacter fumaroxidans (strain DSM 10017 / MPOB).